We begin with the raw amino-acid sequence, 456 residues long: Bifunctional protein GlmU (456 aa).

Positions 1–229 (MLNNAMSVVI…LSEVEGVNNR (229 aa)) are pyrophosphorylase. UDP-N-acetyl-alpha-D-glucosamine-binding positions include 11–14 (LAAG), K25, Q76, 81–82 (GT), 103–105 (YGD), G140, E154, N169, and N227. D105 lines the Mg(2+) pocket. A Mg(2+)-binding site is contributed by N227. The segment at 230–250 (LQLSRLERVYQSEQAEKLLLA) is linker. The interval 251-456 (GVMLRDPARF…EGWRRPVKKK (206 aa)) is N-acetyltransferase. Residues R333 and K351 each contribute to the UDP-N-acetyl-alpha-D-glucosamine site. H363 functions as the Proton acceptor in the catalytic mechanism. 2 residues coordinate UDP-N-acetyl-alpha-D-glucosamine: Y366 and N377. Residues A380, 386–387 (NY), S405, A423, and R440 contribute to the acetyl-CoA site.

This sequence in the N-terminal section; belongs to the N-acetylglucosamine-1-phosphate uridyltransferase family. In the C-terminal section; belongs to the transferase hexapeptide repeat family. In terms of assembly, homotrimer. It depends on Mg(2+) as a cofactor.

It localises to the cytoplasm. It carries out the reaction alpha-D-glucosamine 1-phosphate + acetyl-CoA = N-acetyl-alpha-D-glucosamine 1-phosphate + CoA + H(+). The catalysed reaction is N-acetyl-alpha-D-glucosamine 1-phosphate + UTP + H(+) = UDP-N-acetyl-alpha-D-glucosamine + diphosphate. It functions in the pathway nucleotide-sugar biosynthesis; UDP-N-acetyl-alpha-D-glucosamine biosynthesis; N-acetyl-alpha-D-glucosamine 1-phosphate from alpha-D-glucosamine 6-phosphate (route II): step 2/2. Its pathway is nucleotide-sugar biosynthesis; UDP-N-acetyl-alpha-D-glucosamine biosynthesis; UDP-N-acetyl-alpha-D-glucosamine from N-acetyl-alpha-D-glucosamine 1-phosphate: step 1/1. It participates in bacterial outer membrane biogenesis; LPS lipid A biosynthesis. Its function is as follows. Catalyzes the last two sequential reactions in the de novo biosynthetic pathway for UDP-N-acetylglucosamine (UDP-GlcNAc). The C-terminal domain catalyzes the transfer of acetyl group from acetyl coenzyme A to glucosamine-1-phosphate (GlcN-1-P) to produce N-acetylglucosamine-1-phosphate (GlcNAc-1-P), which is converted into UDP-GlcNAc by the transfer of uridine 5-monophosphate (from uridine 5-triphosphate), a reaction catalyzed by the N-terminal domain. The polypeptide is Bifunctional protein GlmU (Escherichia coli O6:K15:H31 (strain 536 / UPEC)).